Reading from the N-terminus, the 369-residue chain is Homoserine O-succinyltransferase (369 aa).

Residues 1–21 (MVRIVPSARRTRAPAKLDGRS) are disordered. One can recognise an AB hydrolase-1 domain in the interval 86–350 (VVFVAGGISA…PFGHDAFLKE (265 aa)). The segment at 92 to 95 (GISA) is important for substrate specificity. Catalysis depends on Ser172, which acts as the Nucleophile. Arg233 is a binding site for substrate. Catalysis depends on residues Asp314 and His344. Position 345 (Asp345) interacts with substrate.

The protein belongs to the AB hydrolase superfamily. MetX family. In terms of assembly, homodimer.

The protein localises to the cytoplasm. It catalyses the reaction L-homoserine + succinyl-CoA = O-succinyl-L-homoserine + CoA. The protein operates within amino-acid biosynthesis; L-methionine biosynthesis via de novo pathway; O-succinyl-L-homoserine from L-homoserine: step 1/1. Transfers a succinyl group from succinyl-CoA to L-homoserine, forming succinyl-L-homoserine. The sequence is that of Homoserine O-succinyltransferase from Xanthomonas campestris pv. campestris (strain ATCC 33913 / DSM 3586 / NCPPB 528 / LMG 568 / P 25).